Here is a 212-residue protein sequence, read N- to C-terminus: Acyl-homoserine-lactone synthase (212 aa).

Belongs to the autoinducer synthase family.

It carries out the reaction a fatty acyl-[ACP] + S-adenosyl-L-methionine = an N-acyl-L-homoserine lactone + S-methyl-5'-thioadenosine + holo-[ACP] + H(+). Its function is as follows. Required for the synthesis of autoinducer molecules which bind to RaiR and that are involved in the restriction of nodule number. The chain is Acyl-homoserine-lactone synthase (raiI) from Rhizobium etli.